Consider the following 360-residue polypeptide: Phospho-N-acetylmuramoyl-pentapeptide-transferase (360 aa).

10 helical membrane-spanning segments follow: residues Arg24–Ile44, Gly69–Trp89, Trp92–Phe112, Met133–Asn153, Ile158–Val178, Gly199–Ser219, Val239–Tyr259, Val263–Ile283, Phe288–Val308, and Gln337–Leu357.

This sequence belongs to the glycosyltransferase 4 family. MraY subfamily. Mg(2+) serves as cofactor.

Its subcellular location is the cell inner membrane. It catalyses the reaction UDP-N-acetyl-alpha-D-muramoyl-L-alanyl-gamma-D-glutamyl-meso-2,6-diaminopimeloyl-D-alanyl-D-alanine + di-trans,octa-cis-undecaprenyl phosphate = di-trans,octa-cis-undecaprenyl diphospho-N-acetyl-alpha-D-muramoyl-L-alanyl-D-glutamyl-meso-2,6-diaminopimeloyl-D-alanyl-D-alanine + UMP. Its pathway is cell wall biogenesis; peptidoglycan biosynthesis. Functionally, catalyzes the initial step of the lipid cycle reactions in the biosynthesis of the cell wall peptidoglycan: transfers peptidoglycan precursor phospho-MurNAc-pentapeptide from UDP-MurNAc-pentapeptide onto the lipid carrier undecaprenyl phosphate, yielding undecaprenyl-pyrophosphoryl-MurNAc-pentapeptide, known as lipid I. The chain is Phospho-N-acetylmuramoyl-pentapeptide-transferase from Neisseria meningitidis serogroup C (strain 053442).